The primary structure comprises 245 residues: tRNA1(Val) (adenine(37)-N6)-methyltransferase (245 aa).

This sequence belongs to the methyltransferase superfamily. tRNA (adenine-N(6)-)-methyltransferase family.

It is found in the cytoplasm. It carries out the reaction adenosine(37) in tRNA1(Val) + S-adenosyl-L-methionine = N(6)-methyladenosine(37) in tRNA1(Val) + S-adenosyl-L-homocysteine + H(+). In terms of biological role, specifically methylates the adenine in position 37 of tRNA(1)(Val) (anticodon cmo5UAC). The chain is tRNA1(Val) (adenine(37)-N6)-methyltransferase from Salmonella arizonae (strain ATCC BAA-731 / CDC346-86 / RSK2980).